The sequence spans 533 residues: Laccase-2 (533 aa).

Residues 1–23 (MFPGARILATLTLALHLLHGAHA) form the signal peptide. 3 Plastocyanin-like domains span residues 25-171 (IGPA…LSLY), 173-336 (IDNA…LETN), and 382-501 (TAPV…FAED). Cu cation contacts are provided by His98, His100, His143, and His145. Disulfide bonds link Cys119–Cys516 and Cys151–Cys238. The Cu cation site is built by His427, His430, and His432. Asn467 carries N-linked (GlcNAc...) (high mannose) asparagine glycosylation. Cu cation-binding residues include His483, Cys484, His485, and His489.

It belongs to the multicopper oxidase family. Cu cation is required as a cofactor. N-glycosylated at Asn-467; contains a high-mannose glycan with a varying number of mannose residues.

It localises to the secreted. The enzyme catalyses 4 hydroquinone + O2 = 4 benzosemiquinone + 2 H2O. Lignin degradation and detoxification of lignin-derived products. This chain is Laccase-2 (POX2), found in Pleurotus ostreatus (Oyster mushroom).